A 492-amino-acid chain; its full sequence is Glutamyl-tRNA(Gln) amidotransferase subunit A (492 aa).

Active-site charge relay system residues include Lys81 and Ser156. Ser180 serves as the catalytic Acyl-ester intermediate.

It belongs to the amidase family. GatA subfamily. Heterotrimer of A, B and C subunits.

It carries out the reaction L-glutamyl-tRNA(Gln) + L-glutamine + ATP + H2O = L-glutaminyl-tRNA(Gln) + L-glutamate + ADP + phosphate + H(+). Allows the formation of correctly charged Gln-tRNA(Gln) through the transamidation of misacylated Glu-tRNA(Gln) in organisms which lack glutaminyl-tRNA synthetase. The reaction takes place in the presence of glutamine and ATP through an activated gamma-phospho-Glu-tRNA(Gln). In Rhodococcus erythropolis (strain PR4 / NBRC 100887), this protein is Glutamyl-tRNA(Gln) amidotransferase subunit A.